Reading from the N-terminus, the 470-residue chain is Cyclin-B1-3 (470 aa).

The protein belongs to the cyclin family. Cyclin AB subfamily.

The chain is Cyclin-B1-3 (CYCB1-3) from Oryza sativa subsp. japonica (Rice).